The chain runs to 103 residues: Large ribosomal subunit protein bL21 (103 aa).

The protein belongs to the bacterial ribosomal protein bL21 family. As to quaternary structure, part of the 50S ribosomal subunit. Contacts protein L20.

Functionally, this protein binds to 23S rRNA in the presence of protein L20. This is Large ribosomal subunit protein bL21 from Wolinella succinogenes (strain ATCC 29543 / DSM 1740 / CCUG 13145 / JCM 31913 / LMG 7466 / NCTC 11488 / FDC 602W) (Vibrio succinogenes).